A 322-amino-acid chain; its full sequence is Uracil-DNA glycosylase (322 aa).

Residue Asp-142 is the Proton acceptor of the active site.

The protein belongs to the uracil-DNA glycosylase (UDG) superfamily. UNG family.

Its subcellular location is the mitochondrion. The protein resides in the nucleus. The enzyme catalyses Hydrolyzes single-stranded DNA or mismatched double-stranded DNA and polynucleotides, releasing free uracil.. Its function is as follows. Excises uracil residues from the DNA which can arise as a result of misincorporation of dUMP residues by DNA polymerase or due to deamination of cytosine. In Schizosaccharomyces pombe (strain 972 / ATCC 24843) (Fission yeast), this protein is Uracil-DNA glycosylase (ung1).